Reading from the N-terminus, the 299-residue chain is ATP synthase gamma chain (299 aa).

Belongs to the ATPase gamma chain family. In terms of assembly, F-type ATPases have 2 components, CF(1) - the catalytic core - and CF(0) - the membrane proton channel. CF(1) has five subunits: alpha(3), beta(3), gamma(1), delta(1), epsilon(1). CF(0) has three main subunits: a, b and c.

Its subcellular location is the cell membrane. Produces ATP from ADP in the presence of a proton gradient across the membrane. The gamma chain is believed to be important in regulating ATPase activity and the flow of protons through the CF(0) complex. In Leifsonia xyli subsp. xyli (strain CTCB07), this protein is ATP synthase gamma chain.